Here is a 181-residue protein sequence, read N- to C-terminus: Succinate dehydrogenase [ubiquinone] cytochrome b small subunit, mitochondrial (181 aa).

Residues 1-31 (MMLPRSMKFMTGRRIFHTATVRAFQSTAKKS) constitute a mitochondrion transit peptide. Residues 32–66 (LTIPFLPVLPQKPGGVRGTPNDAYVPPPENKLEGS) lie on the Mitochondrial matrix side of the membrane. A helical membrane pass occupies residues 67–88 (YHWYMEKIFALSVVPLATTAML). The Mitochondrial intermembrane portion of the chain corresponds to 89 to 98 (TTGPLSTAAD). Residues 99 to 118 (SFFSVMLLGYCYMEFNSCIT) traverse the membrane as a helical segment. Residue C109 participates in heme binding. The Mitochondrial matrix segment spans residues 119 to 127 (DYISERVYG). Residue Y120 coordinates a ubiquinone. Residues 128 to 148 (VWHKYAMYMLGLGSAVSLFGI) form a helical membrane-spanning segment. Over 149–181 (YKLETENDGVVGLVKSLWDSSEKDNSQKIEAKK) the chain is Mitochondrial intermembrane.

It belongs to the CybS family. In terms of assembly, forms part of complex II containing four subunits: a flavoprotein (FP), an iron-sulfur protein (IP) and a cytochrome b composed of a large and a small subunit.

Its subcellular location is the mitochondrion inner membrane. It functions in the pathway carbohydrate metabolism; tricarboxylic acid cycle. Its function is as follows. Membrane-anchoring subunit of succinate dehydrogenase (SDH) that is involved in system II of the mitochondrial electron transport chain and is responsible for transferring electrons from succinate to ubiquinone (coenzyme Q). SDH3 and SDH4 form the membrane dimer that anchors the catalytic dimer formed by SDH1 and SDH2 to the matrix surface of the mitochondrial inner membrane. Electrons originating from the catalytic dimer enter the membrane dimer for ubiquinone reduction. This Saccharomyces cerevisiae (strain ATCC 204508 / S288c) (Baker's yeast) protein is Succinate dehydrogenase [ubiquinone] cytochrome b small subunit, mitochondrial (SDH4).